A 736-amino-acid chain; its full sequence is Neprilysin-2 (736 aa).

The Cytoplasmic segment spans residues 1-19 (MRPDEEDGTTKSPGSRWTR). Residues 20–40 (IWAIIALILLILFLLVLGAAI) form a helical; Signal-anchor for type II membrane protein membrane-spanning segment. The Extracellular segment spans residues 41–736 (YFYINYKDSS…MNPREKCRVW (696 aa)). A Peptidase M13 domain is found at 52-736 (VCLSPGCIKT…MNPREKCRVW (685 aa)). 5 disulfide bridges follow: Cys-53/Cys-58, Cys-76/Cys-721, Cys-84/Cys-681, Cys-142/Cys-399, and Cys-608/Cys-733. A coiled-coil region spans residues 103–123 (FENLGQDLEFALKELLDENDE). His-571 contacts Zn(2+). Glu-572 is a catalytic residue. Zn(2+) is bound by residues His-575 and Glu-633. Asp-637 serves as the catalytic Proton donor.

Belongs to the peptidase M13 family. It depends on Zn(2+) as a cofactor. Expressed in muscle cells, GLR cells, SMB motor neurons and AIM interneurons.

It localises to the membrane. Required for olfactory plasticity, which is the change from positive chemotaxis to dispersal after prolonged exposure to an odorant. Thought to antagonise snet-1 by degrading excess snet-1 peptides and thus enabling olfactory plasticity. In Caenorhabditis elegans, this protein is Neprilysin-2.